The following is a 318-amino-acid chain: Acetylglutamate kinase (318 aa).

Substrate is bound by residues G80–G81, R102, and N203.

This sequence belongs to the acetylglutamate kinase family. ArgB subfamily.

Its subcellular location is the cytoplasm. The catalysed reaction is N-acetyl-L-glutamate + ATP = N-acetyl-L-glutamyl 5-phosphate + ADP. The protein operates within amino-acid biosynthesis; L-arginine biosynthesis; N(2)-acetyl-L-ornithine from L-glutamate: step 2/4. Catalyzes the ATP-dependent phosphorylation of N-acetyl-L-glutamate. In Bifidobacterium adolescentis (strain ATCC 15703 / DSM 20083 / NCTC 11814 / E194a), this protein is Acetylglutamate kinase.